Consider the following 204-residue polypeptide: MAKVQVNNVVVLDNPSPFYNPFQFEITFECIEDLSEDLEWKIIYVGSAESEEYDQVLDSVLVGPVPAGRHMFVFQADAPNPGLIPDADAVGVTVVLITCTYRGQEFIRVGYYVNNEYTETELRENPPVKPDFSKLQRNILASNPRVTRFHINWEDNTEKLEDAESSNPNLPSLLSTDALPSASKGWSTSENSLNVMLESHMDCM.

The segment at 1-156 (MAKVQVNNVV…TRFHINWEDN (156 aa)) is interaction with histone H3, CHAF1B, and HIRA. Residues 31–37 (IEDLSED) carry the Required for interaction with HIRA motif. The segment at 155–204 (DNTEKLEDAESSNPNLPSLLSTDALPSASKGWSTSENSLNVMLESHMDCM) is required for interaction with HIRA. S192 bears the Phosphoserine; by TLK2 mark.

It belongs to the ASF1 family. In terms of assembly, interacts with histone H3 (via C-terminus), including histone H3.1, H3.2 and H3.3, and histone H4; the interaction with H3 is direct. Probably interacts with the heterodimeric form of H3-H4 taking the place of the second dimer. Interacts with the CHAF1A, CHAF1B and RBBP4 subunits of the CAF-1 complex. Interacts with CABIN1, HAT1, HIRA, NASP, TAF1 and UBN1. Found in a soluble complex with NASP and histones H3 and H4; the interaction with NASP is probably indirect and mediated by H3-H4. Interacts with CDAN1. Found in a cytosolic complex with IPO4 and histones H3 and H4. Interacts with CREBBP. In terms of processing, phosphorylated by TLK1 and TLK2. Highly phosphorylated in S-phase and at lower levels in M-phase. TLK2-mediated phosphorylation at Ser-192 prevents proteasome-dependent degradation.

The protein localises to the nucleus. Its function is as follows. Histone chaperone that facilitates histone deposition and histone exchange and removal during nucleosome assembly and disassembly. Cooperates with chromatin assembly factor 1 (CAF-1) to promote replication-dependent chromatin assembly and with HIRA to promote replication-independent chromatin assembly. Promotes homologous recombination-mediated repair of double-strand breaks (DSBs) at stalled or collapsed replication forks: acts by mediating histone replacement at DSBs, leading to recruitment of the MMS22L-TONSL complex and subsequent loading of RAD51. Also involved in the nuclear import of the histone H3-H4 dimer together with importin-4 (IPO4): specifically recognizes and binds newly synthesized histones with the monomethylation of H3 'Lys-9' and acetylation at 'Lys-14' (H3K9me1K14ac) marks, and diacetylation at 'Lys-5' and 'Lys-12' of H4 (H4K5K12ac) marks in the cytosol. Required for the formation of senescence-associated heterochromatin foci (SAHF) and efficient senescence-associated cell cycle exit. This Bos taurus (Bovine) protein is Histone chaperone ASF1A (ASF1A).